The following is a 120-amino-acid chain: uncharacterized protein (120 aa).

4 helical membrane passes run 9 to 29, 32 to 52, 68 to 88, and 94 to 114; these read WPDF…LFCG, ALMF…ADCL, FVWP…VMAT, and GPEH…SFRF.

The protein resides in the membrane. This is an uncharacterized protein from Escherichia phage Mu (Bacteriophage Mu).